We begin with the raw amino-acid sequence, 1227 residues long: ATP-dependent helicase/nuclease subunit A (1227 aa).

A UvrD-like helicase ATP-binding domain is found at 3 to 477; the sequence is VKYTPDQARA…IIFAENFRSS (475 aa). 24 to 31 serves as a coordination point for ATP; the sequence is ASAGSGKT. The 284-residue stretch at 505–788 folds into the UvrD-like helicase C-terminal domain; it reads GQLKFAAGYD…KLMTIHASKG (284 aa).

It belongs to the helicase family. AddA subfamily. In terms of assembly, heterodimer of AddA and AddB/RexB. Mg(2+) serves as cofactor.

It catalyses the reaction Couples ATP hydrolysis with the unwinding of duplex DNA by translocating in the 3'-5' direction.. The catalysed reaction is ATP + H2O = ADP + phosphate + H(+). The heterodimer acts as both an ATP-dependent DNA helicase and an ATP-dependent, dual-direction single-stranded exonuclease. Recognizes the chi site generating a DNA molecule suitable for the initiation of homologous recombination. The AddA nuclease domain is required for chi fragment generation; this subunit has the helicase and 3' -&gt; 5' nuclease activities. In Lactobacillus delbrueckii subsp. bulgaricus (strain ATCC 11842 / DSM 20081 / BCRC 10696 / JCM 1002 / NBRC 13953 / NCIMB 11778 / NCTC 12712 / WDCM 00102 / Lb 14), this protein is ATP-dependent helicase/nuclease subunit A.